Here is a 374-residue protein sequence, read N- to C-terminus: Queuine tRNA-ribosyltransferase (374 aa).

Asp-89 functions as the Proton acceptor in the catalytic mechanism. Residues 89–93, Asp-143, Gln-187, and Gly-214 contribute to the substrate site; that span reads DSGGF. An RNA binding region spans residues 245-251; that stretch reads GVGKPED. Asp-264 acts as the Nucleophile in catalysis. Residues 269 to 273 are RNA binding; important for wobble base 34 recognition; the sequence is TRNAR. Zn(2+) is bound by residues Cys-302, Cys-304, Cys-307, and His-333.

It belongs to the queuine tRNA-ribosyltransferase family. Homodimer. Within each dimer, one monomer is responsible for RNA recognition and catalysis, while the other monomer binds to the replacement base PreQ1. The cofactor is Zn(2+).

The catalysed reaction is 7-aminomethyl-7-carbaguanine + guanosine(34) in tRNA = 7-aminomethyl-7-carbaguanosine(34) in tRNA + guanine. It participates in tRNA modification; tRNA-queuosine biosynthesis. Catalyzes the base-exchange of a guanine (G) residue with the queuine precursor 7-aminomethyl-7-deazaguanine (PreQ1) at position 34 (anticodon wobble position) in tRNAs with GU(N) anticodons (tRNA-Asp, -Asn, -His and -Tyr). Catalysis occurs through a double-displacement mechanism. The nucleophile active site attacks the C1' of nucleotide 34 to detach the guanine base from the RNA, forming a covalent enzyme-RNA intermediate. The proton acceptor active site deprotonates the incoming PreQ1, allowing a nucleophilic attack on the C1' of the ribose to form the product. After dissociation, two additional enzymatic reactions on the tRNA convert PreQ1 to queuine (Q), resulting in the hypermodified nucleoside queuosine (7-(((4,5-cis-dihydroxy-2-cyclopenten-1-yl)amino)methyl)-7-deazaguanosine). In Shewanella baltica (strain OS185), this protein is Queuine tRNA-ribosyltransferase.